A 78-amino-acid chain; its full sequence is D-alanyl carrier protein (78 aa).

One can recognise a Carrier domain in the interval 1-77; sequence MAVKEEVVEI…KVIAKVESLI (77 aa). The residue at position 35 (S35) is an O-(pantetheine 4'-phosphoryl)serine.

It belongs to the DltC family. Post-translationally, 4'-phosphopantetheine is transferred from CoA to a specific serine of apo-DCP.

The protein resides in the cytoplasm. The protein operates within cell wall biogenesis; lipoteichoic acid biosynthesis. Functionally, carrier protein involved in the D-alanylation of lipoteichoic acid (LTA). The loading of thioester-linked D-alanine onto DltC is catalyzed by D-alanine--D-alanyl carrier protein ligase DltA. The DltC-carried D-alanyl group is further transferred to cell membrane phosphatidylglycerol (PG) by forming an ester bond, probably catalyzed by DltD. D-alanylation of LTA plays an important role in modulating the properties of the cell wall in Gram-positive bacteria, influencing the net charge of the cell wall. The sequence is that of D-alanyl carrier protein from Leuconostoc citreum (strain KM20).